A 1843-amino-acid polypeptide reads, in one-letter code: Zinc finger protein 142 (1843 aa).

2 C2H2-type zinc fingers span residues 103–127 and 164–186; these read YFCE…TETH and LPCP…FKIH. The tract at residues 294-357 is disordered; that stretch reads PAAKLPPGHR…LEGHVGSGTE (64 aa). Residues 318–329 show a composition bias toward acidic residues; that stretch reads SAEEEDAEEEES. The span at 330-340 shows a compositional bias: basic and acidic residues; sequence VTQKDSQKVMD. The residue at position 354 (Ser354) is a Phosphoserine. Residues 363–385 form a C2H2-type 3 zinc finger; the sequence is HMCPECKRCFKKRTHLVEHLHLH. The C2H2-type 4; degenerate zinc-finger motif lies at 391 to 413; the sequence is LQCPNCQKFFTSKSKLKTHLLRE. 7 C2H2-type zinc fingers span residues 453-475, 543-566, 601-623, 629-651, 657-679, 685-707, and 744-767; these read YACP…LKSH, FHCP…KQGH, HQCS…MLLH, HKCE…MLTH, YMCT…MRKH, YQCN…KLRH, and YPCR…NCKH. Residue Lys794 forms a Glycyl lysine isopeptide (Lys-Gly) (interchain with G-Cter in SUMO2) linkage. 2 disordered regions span residues 819–888 and 1103–1177; these read QCLA…LGEV and PKPV…TGTS. Basic and acidic residues predominate over residues 837 to 846; the sequence is PEREDREHEI. Over residues 1157 to 1167 the composition is skewed to pro residues; it reads LPTPSDFPTSP. The span at 1168-1177 shows a compositional bias: polar residues; sequence PENSLPTGTS. 9 consecutive C2H2-type zinc fingers follow at residues 1331-1354, 1388-1411, 1446-1469, 1514-1537, 1608-1630, 1636-1658, 1664-1686, 1692-1715, and 1721-1743; these read LQCG…RLKH, IPCS…LRVH, FSCT…LRRH, LECG…RQHH, YKCT…SRIH, YHCH…MRIH, YLCP…MTKH, YQCP…ETRH, and FMCE…LRKH. Residues Lys1353 and Lys1402 each participate in a glycyl lysine isopeptide (Lys-Gly) (interchain with G-Cter in SUMO2) cross-link. Residue Lys1747 forms a Glycyl lysine isopeptide (Lys-Gly) (interchain with G-Cter in SUMO2) linkage. The C2H2-type 21 zinc-finger motif lies at 1749–1771; the sequence is YVCNVCHRAFRWAAGLRHHALTH. The disordered stretch occupies residues 1795–1843; the sequence is HVRRHHPDQADPNQGVGKDPTTPTVHLHDVKLEDPSPPAPPAPSTGPEG. Residues 1829-1843 are compositionally biased toward pro residues; that stretch reads PSPPAPPAPSTGPEG.

It belongs to the krueppel C2H2-type zinc-finger protein family.

The protein resides in the nucleus. In terms of biological role, may be involved in transcriptional regulation. The chain is Zinc finger protein 142 from Mus musculus (Mouse).